A 67-amino-acid polypeptide reads, in one-letter code: Photosystem II reaction center protein H (67 aa).

Residues 27-47 form a helical membrane-spanning segment; that stretch reads GAVPVMAFIGVLLLVFLVILL.

This sequence belongs to the PsbH family. In terms of assembly, PSII is composed of 1 copy each of membrane proteins PsbA, PsbB, PsbC, PsbD, PsbE, PsbF, PsbH, PsbI, PsbJ, PsbK, PsbL, PsbM, PsbT, PsbX, PsbY, Psb30/Ycf12, peripheral proteins PsbO, CyanoQ (PsbQ), PsbU, PsbV and a large number of cofactors. It forms dimeric complexes.

It localises to the cellular thylakoid membrane. Its function is as follows. One of the components of the core complex of photosystem II (PSII), required for its stability and/or assembly. PSII is a light-driven water:plastoquinone oxidoreductase that uses light energy to abstract electrons from H(2)O, generating O(2) and a proton gradient subsequently used for ATP formation. It consists of a core antenna complex that captures photons, and an electron transfer chain that converts photonic excitation into a charge separation. In Prochlorococcus marinus (strain MIT 9211), this protein is Photosystem II reaction center protein H.